The primary structure comprises 505 residues: Deoxyguanosinetriphosphate triphosphohydrolase (505 aa).

The region spanning 66–273 (RLTHSMEVQQ…MEAADDISYC (208 aa)) is the HD domain.

The protein belongs to the dGTPase family. Type 1 subfamily. Homotetramer. Mg(2+) is required as a cofactor.

The catalysed reaction is dGTP + H2O = 2'-deoxyguanosine + triphosphate + H(+). Functionally, dGTPase preferentially hydrolyzes dGTP over the other canonical NTPs. The polypeptide is Deoxyguanosinetriphosphate triphosphohydrolase (Escherichia coli O139:H28 (strain E24377A / ETEC)).